The chain runs to 649 residues: Glycerol-3-phosphate dehydrogenase, mitochondrial (649 aa).

Residue 69 to 97 (DVLIIGGGATGTGCALDAATRGLNVALVE) coordinates FAD.

This sequence belongs to the FAD-dependent glycerol-3-phosphate dehydrogenase family. The cofactor is FAD.

It localises to the mitochondrion inner membrane. It is found in the mitochondrion intermembrane space. It carries out the reaction a quinone + sn-glycerol 3-phosphate = dihydroxyacetone phosphate + a quinol. It participates in polyol metabolism; glycerol degradation via glycerol kinase pathway; glycerone phosphate from sn-glycerol 3-phosphate (anaerobic route): step 1/1. This is Glycerol-3-phosphate dehydrogenase, mitochondrial (GUT2) from Saccharomyces cerevisiae (strain ATCC 204508 / S288c) (Baker's yeast).